Consider the following 528-residue polypeptide: Facilitator of iron transport 1 (528 aa).

The first 18 residues, 1-18, serve as a signal peptide directing secretion; sequence MKLSSAFVLSAITVAALG. Repeat copies occupy residues 20–98, 99–168, and 169–233. The 4 X approximate tandem repeats stretch occupies residues 20–274; sequence SITTTITATK…ERAPASTVAT (255 aa). Disordered stretches follow at residues 79–100, 145–172, and 214–234; these read SIVE…GSSI, AAET…SITT, and ASPV…SGSS. Polar residues-rich tracts occupy residues 81-93 and 145-163; these read VEPS…TSAD and AAET…TSAD. The 1-4; truncated repeat unit spans residues 234-274; that stretch reads SITTTITATKNGHVYTKTVTQDATFVWTGEGERAPASTVAT. 12 consecutive repeat copies span residues 289–294, 295–300, 301–306, 307–312, 313–318, 319–324, 325–330, 331–336, 337–342, 343–348, 349–353, and 354–359. The interval 289–359 is 12 X 6 AA approximate tandem repeats, Ser/Thr-rich; that stretch reads SIVEASSAVE…AVETSAVETS (71 aa). Composition is skewed to low complexity over residues 298–388 and 398–435; these read ETSS…QASS and TSSV…SSAT. A disordered region spans residues 298–471; the sequence is ETSSAAETSS…SNNWSSSSSA (174 aa). A glycan (N-linked (GlcNAc...) asparagine) is linked at asparagine 412. The span at 446–457 shows a compositional bias: polar residues; sequence YTESSSRDAQSV. Residues 462–471 are compositionally biased toward low complexity; the sequence is SNNWSSSSSA. Asparagine 464 carries an N-linked (GlcNAc...) asparagine glycan. 488–495 contacts ATP; it reads GIFTNGKS. The N-linked (GlcNAc...) asparagine glycan is linked to asparagine 503. The GPI-anchor amidated glycine moiety is linked to residue glycine 506. Positions 507-528 are cleaved as a propeptide — removed in mature form; that stretch reads AADSIAAGTGLMGAALAAVIFL.

The GPI-anchor is attached to the protein in the endoplasmic reticulum and serves to target the protein to the cell surface. There, the glucosamine-inositol phospholipid moiety is cleaved off and the GPI-modified mannoprotein is covalently attached via its lipidless GPI glycan remnant to the 1,6-beta-glucan of the outer cell wall layer.

The protein localises to the secreted. Its subcellular location is the cell wall. It is found in the membrane. Its function is as follows. Involved in the uptake of non-siderophore sources of iron and the siderophores ferrioxamine B and ferrichrome. Has a role in the retention of iron in the cell wall and periplasmic space. In Saccharomyces cerevisiae (strain ATCC 204508 / S288c) (Baker's yeast), this protein is Facilitator of iron transport 1 (FIT1).